Reading from the N-terminus, the 372-residue chain is Invasion protein InvE (372 aa).

Residues 1–19 (MIPGSTSGISFSRILSRQT) show a composition bias toward polar residues. Residues 1–46 (MIPGSTSGISFSRILSRQTSHQDATQHTDAQQAEIQQAAEDSSPGA) form a disordered region. Positions 21-40 (HQDATQHTDAQQAEIQQAAE) are enriched in low complexity.

It localises to the cell membrane. Involved in the triggering of intracellular events that lead to microbial internalization. These events include increase in calcium level, redistribution of actin microfilaments, and changes in the normal structure of the microvilli. Encoded within the type III secretion system (SPI-1 T3SS), it is essential for the translocation of protein effectors into host cells. Forms a complex with SipB and SipC in the presence of their chaperone SicA. Positively regulates the secretion of SPI-1 T3SS effector proteins SipB, SipC and SipD and negatively influences the secretion of SipA, SopA and SptP. This chain is Invasion protein InvE (invE), found in Salmonella typhimurium (strain LT2 / SGSC1412 / ATCC 700720).